A 577-amino-acid chain; its full sequence is Proline--tRNA ligase (577 aa).

It belongs to the class-II aminoacyl-tRNA synthetase family. ProS type 1 subfamily. Homodimer.

It is found in the cytoplasm. The catalysed reaction is tRNA(Pro) + L-proline + ATP = L-prolyl-tRNA(Pro) + AMP + diphosphate. Catalyzes the attachment of proline to tRNA(Pro) in a two-step reaction: proline is first activated by ATP to form Pro-AMP and then transferred to the acceptor end of tRNA(Pro). As ProRS can inadvertently accommodate and process non-cognate amino acids such as alanine and cysteine, to avoid such errors it has two additional distinct editing activities against alanine. One activity is designated as 'pretransfer' editing and involves the tRNA(Pro)-independent hydrolysis of activated Ala-AMP. The other activity is designated 'posttransfer' editing and involves deacylation of mischarged Ala-tRNA(Pro). The misacylated Cys-tRNA(Pro) is not edited by ProRS. This is Proline--tRNA ligase from Marinobacter nauticus (strain ATCC 700491 / DSM 11845 / VT8) (Marinobacter aquaeolei).